Here is a 909-residue protein sequence, read N- to C-terminus: UPF0182 protein H16_A1615 (909 aa).

The next 7 helical transmembrane spans lie at 16 to 36 (TWVVAVIVALIAVSRVTGLVV), 58 to 78 (ALLFLAVFAVSAGALWLSGWL), 114 to 134 (VAVLVGLLMAVGELSSWAIAL), 169 to 189 (WLLLLLGCSAVLAGVVYGLRG), 205 to 225 (ATHGSALLGLFFALQAWSYWL), 246 to 266 (VHVGLPVLWLQVGLAAAAAAA), and 281 to 301 (AAALLVVGSAIVLGTIWPALF).

Belongs to the UPF0182 family.

It is found in the cell membrane. This Cupriavidus necator (strain ATCC 17699 / DSM 428 / KCTC 22496 / NCIMB 10442 / H16 / Stanier 337) (Ralstonia eutropha) protein is UPF0182 protein H16_A1615.